A 406-amino-acid polypeptide reads, in one-letter code: Arginine biosynthesis bifunctional protein ArgJ (406 aa).

6 residues coordinate substrate: Thr156, Lys182, Thr193, Glu279, Asn401, and Thr406. Thr193 functions as the Nucleophile in the catalytic mechanism.

The protein belongs to the ArgJ family. In terms of assembly, heterotetramer of two alpha and two beta chains.

It localises to the cytoplasm. The catalysed reaction is N(2)-acetyl-L-ornithine + L-glutamate = N-acetyl-L-glutamate + L-ornithine. It carries out the reaction L-glutamate + acetyl-CoA = N-acetyl-L-glutamate + CoA + H(+). It functions in the pathway amino-acid biosynthesis; L-arginine biosynthesis; L-ornithine and N-acetyl-L-glutamate from L-glutamate and N(2)-acetyl-L-ornithine (cyclic): step 1/1. It participates in amino-acid biosynthesis; L-arginine biosynthesis; N(2)-acetyl-L-ornithine from L-glutamate: step 1/4. Its function is as follows. Catalyzes two activities which are involved in the cyclic version of arginine biosynthesis: the synthesis of N-acetylglutamate from glutamate and acetyl-CoA as the acetyl donor, and of ornithine by transacetylation between N(2)-acetylornithine and glutamate. The chain is Arginine biosynthesis bifunctional protein ArgJ from Bacillus licheniformis (strain ATCC 14580 / DSM 13 / JCM 2505 / CCUG 7422 / NBRC 12200 / NCIMB 9375 / NCTC 10341 / NRRL NRS-1264 / Gibson 46).